The primary structure comprises 214 residues: External core antigen (214 aa).

Positions Met-1–Ala-19 are cleaved as a signal peptide. Positions Gly-25–Leu-27 are HBEAG. Residues Asn-165–Cys-214 form a disordered region. The span at Val-178–Ser-207 shows a compositional bias: basic residues. Residues Ser-186–Pro-192 form a 1; half-length repeat. A 3 X 8 AA repeats of S-P-R-R-R-R-S-Q region spans residues Ser-186–Gln-208. Positions Ser-186–Cys-214 are excised as a propeptide. 2 tandem repeats follow at residues Ser-193–Gln-200 and Ser-201–Gln-208.

The protein belongs to the orthohepadnavirus precore antigen family. As to quaternary structure, homodimerizes. Phosphorylated. In terms of processing, cleaved by host furin.

Its subcellular location is the secreted. The protein resides in the host nucleus. In terms of biological role, may regulate immune response to the intracellular capsid in acting as a T-cell tolerogen, by having an immunoregulatory effect which prevents destruction of infected cells by cytotoxic T-cells. This immune regulation may predispose to chronicity during perinatal infections and prevent severe liver injury during adult infections. The polypeptide is External core antigen (Homo sapiens (Human)).